Here is a 491-residue protein sequence, read N- to C-terminus: Arginine decarboxylase (491 aa).

N6-(pyridoxal phosphate)lysine is present on Lys227.

The protein belongs to the Orn/Lys/Arg decarboxylase class-I family. Requires pyridoxal 5'-phosphate as cofactor.

The protein localises to the cytoplasm. The catalysed reaction is L-arginine + H(+) = agmatine + CO2. It functions in the pathway amine and polyamine biosynthesis; agmatine biosynthesis; agmatine from L-arginine: step 1/1. In terms of biological role, catalyzes the formation of agmatine from arginine. The polypeptide is Arginine decarboxylase (speA) (Halalkalibacterium halodurans (strain ATCC BAA-125 / DSM 18197 / FERM 7344 / JCM 9153 / C-125) (Bacillus halodurans)).